Reading from the N-terminus, the 428-residue chain is Probable G-protein coupled receptor (428 aa).

At Met-1–Asp-46 the chain is on the extracellular side. An N-linked (GlcNAc...) asparagine glycan is attached at Asn-18. A helical membrane pass occupies residues Leu-47–Val-67. At Met-68–Cys-93 the chain is on the cytoplasmic side. Residues Ala-94–Phe-114 form a helical membrane-spanning segment. At Thr-115–Gln-120 the chain is on the extracellular side. The chain crosses the membrane as a helical span at residues Val-121–Ser-141. Residues Val-142–Leu-162 lie on the Cytoplasmic side of the membrane. A helical transmembrane segment spans residues Val-163–Phe-183. Over Gly-184–Gly-210 the chain is Extracellular. Residues Val-211–Val-231 form a helical membrane-spanning segment. The Cytoplasmic segment spans residues Tyr-232–Ala-293. The chain crosses the membrane as a helical span at residues Ala-294 to Phe-314. At His-315–Ala-428 the chain is on the extracellular side. Over residues Ser-398–Asn-414 the composition is skewed to polar residues. Residues Ser-398 to Ala-428 are disordered.

It belongs to the G-protein coupled receptor 1 family.

The protein localises to the cell membrane. The protein is Probable G-protein coupled receptor of Oryzias latipes (Japanese rice fish).